A 476-amino-acid chain; its full sequence is Glycogen synthase (476 aa).

K15 is a binding site for ADP-alpha-D-glucose.

The protein belongs to the glycosyltransferase 1 family. Bacterial/plant glycogen synthase subfamily.

It catalyses the reaction [(1-&gt;4)-alpha-D-glucosyl](n) + ADP-alpha-D-glucose = [(1-&gt;4)-alpha-D-glucosyl](n+1) + ADP + H(+). It functions in the pathway glycan biosynthesis; glycogen biosynthesis. Its function is as follows. Synthesizes alpha-1,4-glucan chains using ADP-glucose. The sequence is that of Glycogen synthase from Streptococcus mutans serotype c (strain ATCC 700610 / UA159).